The sequence spans 731 residues: 1,4-alpha-glucan branching enzyme GlgB (731 aa).

The active-site Nucleophile is the D409. E462 (proton donor) is an active-site residue.

The protein belongs to the glycosyl hydrolase 13 family. GlgB subfamily. Monomer.

The enzyme catalyses Transfers a segment of a (1-&gt;4)-alpha-D-glucan chain to a primary hydroxy group in a similar glucan chain.. Its pathway is glycan biosynthesis; glycogen biosynthesis. In terms of biological role, catalyzes the formation of the alpha-1,6-glucosidic linkages in glycogen by scission of a 1,4-alpha-linked oligosaccharide from growing alpha-1,4-glucan chains and the subsequent attachment of the oligosaccharide to the alpha-1,6 position. This chain is 1,4-alpha-glucan branching enzyme GlgB, found in Roseobacter denitrificans (strain ATCC 33942 / OCh 114) (Erythrobacter sp. (strain OCh 114)).